The sequence spans 144 residues: MKIVTLFSDGSCLGNPGAGGWAYILRYNEAQKKASGGEAYTTNNQMELKAAIMGLKALKEPCEVRLFTDSSYVANSINEWLANWQKRNFKNVKNVELWQEYLEISKPHKVVASWVKGHAGHPENEECDQMARNEALKIKDENKI.

The RNase H type-1 domain occupies 1–136 (MKIVTLFSDG…CDQMARNEAL (136 aa)). Mg(2+) is bound by residues Asp9, Glu47, Asp69, and Asp128.

It belongs to the RNase H family. Monomer. The cofactor is Mg(2+).

It is found in the cytoplasm. It carries out the reaction Endonucleolytic cleavage to 5'-phosphomonoester.. Its function is as follows. Endonuclease that specifically degrades the RNA of RNA-DNA hybrids. This is Ribonuclease H from Campylobacter concisus (strain 13826).